A 231-amino-acid chain; its full sequence is Large ribosomal subunit protein uL1 (231 aa).

The protein belongs to the universal ribosomal protein uL1 family. In terms of assembly, part of the 50S ribosomal subunit.

Binds directly to 23S rRNA. The L1 stalk is quite mobile in the ribosome, and is involved in E site tRNA release. Its function is as follows. Protein L1 is also a translational repressor protein, it controls the translation of the L11 operon by binding to its mRNA. The protein is Large ribosomal subunit protein uL1 of Ralstonia nicotianae (strain ATCC BAA-1114 / GMI1000) (Ralstonia solanacearum).